Consider the following 838-residue polypeptide: Leucine--tRNA ligase (838 aa).

A 'HIGH' region motif is present at residues 36-46; sequence PYPSGKIHMGH. The 'KMSKS' region motif lies at 611–615; that stretch reads KMSKS. K614 is an ATP binding site.

The protein belongs to the class-I aminoacyl-tRNA synthetase family.

The protein resides in the cytoplasm. It carries out the reaction tRNA(Leu) + L-leucine + ATP = L-leucyl-tRNA(Leu) + AMP + diphosphate. In Wolbachia sp. subsp. Drosophila simulans (strain wRi), this protein is Leucine--tRNA ligase.